A 478-amino-acid polypeptide reads, in one-letter code: Shikimate biosynthesis protein AroDE (478 aa).

Positions 1-208 are 3-dehydroquinate dehydratase; the sequence is MLCTTISGPS…LKHHYFYNFA (208 aa). 3-dehydroquinate-binding positions include serine 21, 29–31, and 55–57; these read EMR and AWK. Residue histidine 110 is the Proton donor/acceptor; for 3-dehydroquinate dehydratase activity of the active site. The active-site Schiff-base intermediate with substrate; for 3-dehydroquinate dehydratase activity is the lysine 133. 3-dehydroquinate contacts are provided by arginine 171 and glutamine 196. The shikimate 5-dehydrogenase stretch occupies residues 209 to 478; sequence SLSAQSPICA…VLASLFSIAP (270 aa). Residue 226–228 participates in shikimate binding; it reads SIG. Lysine 277 serves as the catalytic Proton acceptor; for shikimate dehydrogenase activity. Shikimate is bound by residues asparagine 298 and aspartate 313. NADP(+)-binding positions include 337–341, 360–362, and glycine 435; these read GAGGA and NRT. Residue glutamine 442 participates in shikimate binding.

In the N-terminal section; belongs to the type-I 3-dehydroquinase family. It in the C-terminal section; belongs to the shikimate dehydrogenase family.

The enzyme catalyses 3-dehydroquinate = 3-dehydroshikimate + H2O. It carries out the reaction shikimate + NADP(+) = 3-dehydroshikimate + NADPH + H(+). It functions in the pathway metabolic intermediate biosynthesis; chorismate biosynthesis; chorismate from D-erythrose 4-phosphate and phosphoenolpyruvate: step 3/7. Its pathway is metabolic intermediate biosynthesis; chorismate biosynthesis; chorismate from D-erythrose 4-phosphate and phosphoenolpyruvate: step 4/7. Its function is as follows. Bifunctional enzyme that catalyzes two sequential steps of the aromatic amino acids biosynthetic pathway. In the first reaction, the AroD domain catalyzes the cis-dehydration of 3-dehydroquinate (DHQ) and introduces the first double bond of the aromatic ring to yield 3-dehydroshikimate; in the second reaction, the AroE domain catalyzes the reversible NADPH linked reduction of 3-dehydroshikimate (DHSA) to yield shikimate (SA). This chain is Shikimate biosynthesis protein AroDE, found in Chlamydia trachomatis serovar D (strain ATCC VR-885 / DSM 19411 / UW-3/Cx).